Consider the following 291-residue polypeptide: Formamidopyrimidine-DNA glycosylase (291 aa).

The Schiff-base intermediate with DNA role is filled by Pro-2. Glu-3 functions as the Proton donor in the catalytic mechanism. Lys-58 functions as the Proton donor; for beta-elimination activity in the catalytic mechanism. DNA-binding residues include His-104, Arg-123, and Lys-166. The segment at 257–291 (KVYDREGKPCPTCGGTVQRFVQNGRSTFWCPKCQK) adopts an FPG-type zinc-finger fold. Arg-281 acts as the Proton donor; for delta-elimination activity in catalysis.

The protein belongs to the FPG family. Monomer. Zn(2+) serves as cofactor.

The catalysed reaction is Hydrolysis of DNA containing ring-opened 7-methylguanine residues, releasing 2,6-diamino-4-hydroxy-5-(N-methyl)formamidopyrimidine.. It carries out the reaction 2'-deoxyribonucleotide-(2'-deoxyribose 5'-phosphate)-2'-deoxyribonucleotide-DNA = a 3'-end 2'-deoxyribonucleotide-(2,3-dehydro-2,3-deoxyribose 5'-phosphate)-DNA + a 5'-end 5'-phospho-2'-deoxyribonucleoside-DNA + H(+). Its function is as follows. Involved in base excision repair of DNA damaged by oxidation or by mutagenic agents. Acts as a DNA glycosylase that recognizes and removes damaged bases. Has a preference for oxidized purines, such as 7,8-dihydro-8-oxoguanine (8-oxoG). Has AP (apurinic/apyrimidinic) lyase activity and introduces nicks in the DNA strand. Cleaves the DNA backbone by beta-delta elimination to generate a single-strand break at the site of the removed base with both 3'- and 5'-phosphates. The polypeptide is Formamidopyrimidine-DNA glycosylase (Rhodopseudomonas palustris (strain TIE-1)).